A 214-amino-acid chain; its full sequence is Cell division protein SepF (214 aa).

A disordered region spans residues 23–70 (YYDDRAPSRGFPRPRFDDGYGRYDGDDYDDPRREPADCPPPAGYRGGY). Over residues 36–58 (PRFDDGYGRYDGDDYDDPRREPA) the composition is skewed to basic and acidic residues.

The protein belongs to the SepF family. In terms of assembly, homodimer. Interacts with FtsZ.

The protein resides in the cytoplasm. Functionally, cell division protein that is part of the divisome complex and is recruited early to the Z-ring. Probably stimulates Z-ring formation, perhaps through the cross-linking of FtsZ protofilaments. Its function overlaps with FtsA. This is Cell division protein SepF from Mycolicibacterium paratuberculosis (strain ATCC BAA-968 / K-10) (Mycobacterium paratuberculosis).